A 488-amino-acid chain; its full sequence is Bifunctional NAD(P)H-hydrate repair enzyme Nnr (488 aa).

Residues 1 to 214 (MTVLYQNRQI…LSESFFRAVF (214 aa)) form an NAD(P)H-hydrate epimerase region. A YjeF N-terminal domain is found at 10 to 211 (IRELERLAVE…RLGLSESFFR (202 aa)). Positions 57–61 (NNGGD) are NADPHX 1; for epimerase activity. 2 residues coordinate K(+): Asn58 and Asp121. An NADPHX 1; for epimerase activity region spans residues 125-131 (GSGLSGE). The (6S)-NADPHX site is built by Tyr136 and Asp154. K(+) is bound at residue Ser157. In terms of domain architecture, YjeF C-terminal spans 221 to 488 (EWKGVFPLLP…FPHLRVLVNP (268 aa)). Residues 221–488 (EWKGVFPLLP…FPHLRVLVNP (268 aa)) form an ADP-dependent (S)-NAD(P)H-hydrate dehydratase region. Residue Gly317 participates in (6S)-NADPHX binding. An NADPHX 2; for dehydratase activity region spans residues 363–369 (HPGEASR). ADP is bound by residues 400–404 (KGVGT) and 420–429 (NPGMATGGMG). Asp430 provides a ligand contact to (6S)-NADPHX.

In the N-terminal section; belongs to the NnrE/AIBP family. The protein in the C-terminal section; belongs to the NnrD/CARKD family. K(+) serves as cofactor.

It carries out the reaction (6S)-NADHX + ADP = AMP + phosphate + NADH + H(+). The catalysed reaction is (6S)-NADPHX + ADP = AMP + phosphate + NADPH + H(+). It catalyses the reaction (6R)-NADHX = (6S)-NADHX. The enzyme catalyses (6R)-NADPHX = (6S)-NADPHX. Bifunctional enzyme that catalyzes the epimerization of the S- and R-forms of NAD(P)HX and the dehydration of the S-form of NAD(P)HX at the expense of ADP, which is converted to AMP. This allows the repair of both epimers of NAD(P)HX, a damaged form of NAD(P)H that is a result of enzymatic or heat-dependent hydration. This chain is Bifunctional NAD(P)H-hydrate repair enzyme Nnr (nnr), found in Coxiella burnetii (strain RSA 493 / Nine Mile phase I).